A 163-amino-acid polypeptide reads, in one-letter code: Nucleotide-binding protein NTHI1194 (163 aa).

This sequence belongs to the YajQ family.

Nucleotide-binding protein. The polypeptide is Nucleotide-binding protein NTHI1194 (Haemophilus influenzae (strain 86-028NP)).